Here is a 729-residue protein sequence, read N- to C-terminus: Polyribonucleotide nucleotidyltransferase (729 aa).

Mg(2+) is bound by residues Asp485 and Asp491. Residues 552-611 (PRITTMKVAEDKIRTIIGKGGATIKGLIESTGVSIDIDDSGVIQLFSPDKMALEEAQKQI) enclose the KH domain. The S1 motif domain maps to 621–689 (GQTYQGKVSK…KQGRVKLEWK (69 aa)).

The protein belongs to the polyribonucleotide nucleotidyltransferase family. In terms of assembly, component of the RNA degradosome, which is a multiprotein complex involved in RNA processing and mRNA degradation. Requires Mg(2+) as cofactor.

The protein resides in the cytoplasm. It carries out the reaction RNA(n+1) + phosphate = RNA(n) + a ribonucleoside 5'-diphosphate. In terms of biological role, involved in mRNA degradation. Catalyzes the phosphorolysis of single-stranded polyribonucleotides processively in the 3'- to 5'-direction. The chain is Polyribonucleotide nucleotidyltransferase from Legionella pneumophila (strain Corby).